Here is a 2298-residue protein sequence, read N- to C-terminus: Non-reducing polyketide synthase pgmA (2298 aa).

The tract at residues 8–333 (LFIFGDQTLD…IYNVLKQSPL (326 aa)) is N-terminal acylcarrier protein transacylase domain (SAT). The segment at 336–361 (YLSSKPAQSRQPVSNEGAPEPGNGRQ) is disordered. The span at 340–349 (KPAQSRQPVS) shows a compositional bias: polar residues. The Ketosynthase family 3 (KS3) domain occupies 360 to 798 (RQKLAIIGMS…GGNSALLVED (439 aa)). Catalysis depends on for beta-ketoacyl synthase activity residues Cys-532, His-667, and His-714. The acyl/malonyl transferases stretch occupies residues 901 to 1193 (VFAFTGQGAH…GMVKGVLGPQ (293 aa)). Ser-994 serves as the catalytic For acyl/malonyl transferase activity. Residues 1283-1415 (HRVVEETHDS…CVVRFRDRGL (133 aa)) form an N-terminal hotdog fold region. One can recognise a PKS/mFAS DH domain in the interval 1283-1589 (HRVVEETHDS…IQGVPRRVLK (307 aa)). Positions 1294–1586 (KTRIVIEADI…QISIQGVPRR (293 aa)) are product template (PT) domainn. Residue His-1315 is the Proton acceptor; for dehydratase activity of the active site. Positions 1438–1589 (VTGETARFNR…IQGVPRRVLK (152 aa)) are C-terminal hotdog fold. Catalysis depends on Asp-1502, which acts as the Proton donor; for dehydratase activity. A disordered region spans residues 1619–1642 (YPVANGHAQATPTSGPVNGEPRPS). In terms of domain architecture, Carrier 1 spans 1641–1716 (PSRFPRALEI…SLRALLSEPE (76 aa)). Position 1675 is an O-(pantetheine 4'-phosphoryl)serine (Ser-1675). The segment at 1716-1762 (ERSTNGMPAASAKDTSRFDEIPPMNGHKTNGHVMNGHSNGSSNGLPD) is disordered. Polar residues predominate over residues 1751–1760 (GHSNGSSNGL). Positions 1765–1840 (KVDFQRVLQI…DLKRYLFPQD (76 aa)) constitute a Carrier 2 domain. At Ser-1799 the chain carries O-(pantetheine 4'-phosphoryl)serine. Residues 1927 to 2178 (VTGASGSLGG…YWTPVEEVAG (252 aa)) are reductase (R) domain.

The protein operates within pigment biosynthesis. It participates in secondary metabolite biosynthesis. Its function is as follows. Non-reducing polyketide synthase; part of the gene cluster that mediates the biosynthesis of pleosporalin A, ascomycone A, as well as a third cryptic naphthoquinone derived pigment, all responsible for the coloration of conidia. The non-reducing polyketide synthase pgmA is responsible for the condensation of seven acetyl-CoA units to produce the cyclized heptaketide 3-acetonyl-1,6,8-trihydroxy-2-naphthaldehyde. The pathway begins with the biosynthesis of the cyclized heptaketide 3-acetonyl-1,6,8-trihydroxy-2-naphthaldehyde by the NR-PKS pgmA. The C-6 hydroxyl group is further methylated by the O-methyltransferase pgmB to yield fusarubinaldehyde which is in turn oxidized by the cytochrome P450 monooxygenase pgmC at C-9. The C-1 hydroxyl group is then methylated spontaneously. Although pgmE, pgmD and pgmH are essential for the production of pleosporalin A, it is not the case for the 2 other final products and it remains difficult to assign a specific function to each enzyme. PgmF and pgmG seem not to be involved in pigment biosynthesis although they were regulated by the cluster-specific transcription factor pgmR. The sequence is that of Non-reducing polyketide synthase pgmA from Aspergillus terreus (strain NIH 2624 / FGSC A1156).